The sequence spans 88 residues: Antitoxin VapB21 (88 aa).

Its function is as follows. Antitoxin component of a type II toxin-antitoxin (TA) system. This is Antitoxin VapB21 (vapB21) from Mycobacterium tuberculosis (strain CDC 1551 / Oshkosh).